Reading from the N-terminus, the 548-residue chain is Cilia- and flagella-associated protein 97 (548 aa).

Serine 8 and serine 19 each carry phosphoserine. 3 disordered regions span residues 85-297 (NYLT…RQEN), 407-431 (LSRQ…PPKL), and 497-548 (YSPL…LRSH). Over residues 91–107 (GNERKPKFPSKEQHVEN) the composition is skewed to basic and acidic residues. Low complexity predominate over residues 112 to 121 (TRSPSLLTSS). Acidic residues predominate over residues 152-161 (DYYTDGEESS). Threonine 155 bears the Phosphothreonine mark. Residues serine 160 and serine 161 each carry the phosphoserine modification. Low complexity predominate over residues 191-209 (KASSSSLSSSSSRSSSDCS). Polar residues predominate over residues 214 to 237 (DMQNKPDSGSSGKRVSSVTPSSPK). Residue serine 235 is modified to Phosphoserine. Positions 238-248 (QKCKSGRKSSA) are enriched in basic residues. Phosphoserine is present on serine 259. Positions 264-289 (TDVTPASTPDSSPAQPFELSQSQNQK) are enriched in polar residues. A coiled-coil region spans residues 383 to 460 (RKNYSFTREE…ALLKRLEAVK (78 aa)). Composition is skewed to polar residues over residues 504–514 (SRTSSATSGLS) and 537–548 (IQCSNSKVLRSH).

It belongs to the CFAP97 family.

The chain is Cilia- and flagella-associated protein 97 from Rattus norvegicus (Rat).